The sequence spans 88 residues: Cytochrome c oxidase assembly factor 3, mitochondrial (88 aa).

Residues 1–32 lie on the Mitochondrial matrix side of the membrane; the sequence is MGKLVGAPKGHDRYRDPKTHQITPALYRVRAP. Residues 33–55 form a helical membrane-spanning segment; sequence FFWRNTIALFAVSSIPLAVYLYT. Topologically, residues 56 to 88 are mitochondrial intermembrane; that stretch reads FKKMGDDDLGDIPIPPISDEELQKLKLEYENQK.

Belongs to the COA3 family. In terms of assembly, component of 250-400 kDa complexes called cytochrome oxidase assembly intermediates or COA complexes.

It is found in the mitochondrion inner membrane. Its function is as follows. Required for assembly of cytochrome c oxidase (complex IV). The chain is Cytochrome c oxidase assembly factor 3, mitochondrial (COA3) from Candida albicans (strain WO-1) (Yeast).